The primary structure comprises 355 residues: Protein RecA (355 aa).

An ATP-binding site is contributed by 74–81 (GPESSGKT).

Belongs to the RecA family.

The protein localises to the cytoplasm. Can catalyze the hydrolysis of ATP in the presence of single-stranded DNA, the ATP-dependent uptake of single-stranded DNA by duplex DNA, and the ATP-dependent hybridization of homologous single-stranded DNAs. It interacts with LexA causing its activation and leading to its autocatalytic cleavage. This is Protein RecA from Cytophaga hutchinsonii (strain ATCC 33406 / DSM 1761 / CIP 103989 / NBRC 15051 / NCIMB 9469 / D465).